We begin with the raw amino-acid sequence, 215 residues long: Phosphatidylserine decarboxylase proenzyme (215 aa).

S186 serves as the catalytic Schiff-base intermediate with substrate; via pyruvic acid. S186 carries the post-translational modification Pyruvic acid (Ser); by autocatalysis.

The protein belongs to the phosphatidylserine decarboxylase family. PSD-A subfamily. In terms of assembly, heterodimer of a large membrane-associated beta subunit and a small pyruvoyl-containing alpha subunit. It depends on pyruvate as a cofactor. Post-translationally, is synthesized initially as an inactive proenzyme. Formation of the active enzyme involves a self-maturation process in which the active site pyruvoyl group is generated from an internal serine residue via an autocatalytic post-translational modification. Two non-identical subunits are generated from the proenzyme in this reaction, and the pyruvate is formed at the N-terminus of the alpha chain, which is derived from the carboxyl end of the proenzyme. The post-translation cleavage follows an unusual pathway, termed non-hydrolytic serinolysis, in which the side chain hydroxyl group of the serine supplies its oxygen atom to form the C-terminus of the beta chain, while the remainder of the serine residue undergoes an oxidative deamination to produce ammonia and the pyruvoyl prosthetic group on the alpha chain.

It is found in the cell membrane. It carries out the reaction a 1,2-diacyl-sn-glycero-3-phospho-L-serine + H(+) = a 1,2-diacyl-sn-glycero-3-phosphoethanolamine + CO2. The protein operates within phospholipid metabolism; phosphatidylethanolamine biosynthesis; phosphatidylethanolamine from CDP-diacylglycerol: step 2/2. Catalyzes the formation of phosphatidylethanolamine (PtdEtn) from phosphatidylserine (PtdSer). The sequence is that of Phosphatidylserine decarboxylase proenzyme from Pelagibacter ubique (strain HTCC1062).